The primary structure comprises 197 residues: Dephospho-CoA kinase (197 aa).

In terms of domain architecture, DPCK spans 4–197 (LIGLTGGIAT…VLKWLKTITK (194 aa)). Position 12-17 (12-17 (ATGKST)) interacts with ATP.

The protein belongs to the CoaE family.

Its subcellular location is the cytoplasm. The catalysed reaction is 3'-dephospho-CoA + ATP = ADP + CoA + H(+). It functions in the pathway cofactor biosynthesis; coenzyme A biosynthesis; CoA from (R)-pantothenate: step 5/5. Its function is as follows. Catalyzes the phosphorylation of the 3'-hydroxyl group of dephosphocoenzyme A to form coenzyme A. This Lactiplantibacillus plantarum (strain ATCC BAA-793 / NCIMB 8826 / WCFS1) (Lactobacillus plantarum) protein is Dephospho-CoA kinase.